A 411-amino-acid polypeptide reads, in one-letter code: Phospholipase A1-II 6 (411 aa).

Ser-226 (acyl-ester intermediate) is an active-site residue. Catalysis depends on charge relay system residues Ser-226, Asp-296, and His-334.

The protein belongs to the AB hydrolase superfamily. Lipase family.

It is found in the cytoplasm. Acylhydrolase that catalyzes the hydrolysis of phospholipids at the sn-1 position. The polypeptide is Phospholipase A1-II 6 (Oryza sativa subsp. japonica (Rice)).